A 620-amino-acid polypeptide reads, in one-letter code: Chaperone protein HscA homolog (620 aa).

The protein belongs to the heat shock protein 70 family.

Functionally, chaperone involved in the maturation of iron-sulfur cluster-containing proteins. Has a low intrinsic ATPase activity which is markedly stimulated by HscB. The chain is Chaperone protein HscA homolog from Shewanella baltica (strain OS155 / ATCC BAA-1091).